The following is a 156-amino-acid chain: ATP synthase subunit b 2 (156 aa).

The helical transmembrane segment at 6–26 (SMFGQAISFVIFVWLCMKYVW) threads the bilayer.

It belongs to the ATPase B chain family. F-type ATPases have 2 components, F(1) - the catalytic core - and F(0) - the membrane proton channel. F(1) has five subunits: alpha(3), beta(3), gamma(1), delta(1), epsilon(1). F(0) has three main subunits: a(1), b(2) and c(10-14). The alpha and beta chains form an alternating ring which encloses part of the gamma chain. F(1) is attached to F(0) by a central stalk formed by the gamma and epsilon chains, while a peripheral stalk is formed by the delta and b chains.

It localises to the cell inner membrane. In terms of biological role, f(1)F(0) ATP synthase produces ATP from ADP in the presence of a proton or sodium gradient. F-type ATPases consist of two structural domains, F(1) containing the extramembraneous catalytic core and F(0) containing the membrane proton channel, linked together by a central stalk and a peripheral stalk. During catalysis, ATP synthesis in the catalytic domain of F(1) is coupled via a rotary mechanism of the central stalk subunits to proton translocation. Functionally, component of the F(0) channel, it forms part of the peripheral stalk, linking F(1) to F(0). The polypeptide is ATP synthase subunit b 2 (Vibrio campbellii (strain ATCC BAA-1116)).